The following is a 687-amino-acid chain: Pentatricopeptide repeat-containing protein At3g09060 (687 aa).

PPR repeat units lie at residues 42-76 (SAVV…ECKC), 77-107 (DEDV…MREI), 113-147 (AIRS…GVAP), 148-182 (NLQT…GFKP), 183-217 (DVFS…GVAP), 218-253 (DVTC…SVYP), 254-288 (NVKT…EREK), 289-323 (DLYT…KASI), 324-358 (DVVT…NSVN), 359-392 (IVSY…GYAA), 393-427 (DKTT…GGHL), 428-462 (DVYA…GVEL), 463-497 (NSHV…GCRP), 498-532 (TVVS…GWKP), 533-567 (DLKT…GLET), 568-602 (DVMM…NCTA), 603-637 (NLVT…GLQP), and 638-672 (DIIS…GIFP).

This sequence belongs to the PPR family. P subfamily.

The sequence is that of Pentatricopeptide repeat-containing protein At3g09060 from Arabidopsis thaliana (Mouse-ear cress).